The primary structure comprises 391 residues: SSTETPPSYNQLNYNENLLRFFNSKPVTAPVELDPPKVESSYVSSARGEDARSTLSPVQGFEGSGGSGSSGNFTTGSNLHMSSVTNTSNAGTGTSGTGNSGDGGGGGGADGPGSGAAPPVTLTESLLNKHNDEMEKFMLKKHRESRGRSGEKNKKSANDAMKMLEYSGPGPGHGHGIKRGGSHSWEGEANKPKQQLTLNTGGGGGGMPPFLDIQHTSSSTQNKGLAGVGVGGAGGGVVGVGSSAGGNGSGTGNNNGNGNNNQPTTNQFTQSGLSCTQNINLWPPFSVGITTPTSVLSSHTAVAQSSFSPQHSLFPTFYYIPASIAASSPSGTSPNPNRPHKHAHVHSSSEKPSTSQAAAATMPLQYMTGVMYPHPSLFYTHPAAAAATAMV.

4 disordered regions span residues 27–121 (VTAP…PPVT), 163–188 (MLEYSGPGPGHGHGIKRGGSHSWEGE), 241–270 (GSSAGGNGSGTGNNNGNGNNNQPTTNQFTQ), and 328–357 (SPSGTSPNPNRPHKHAHVHSSSEKPSTSQA). Positions 93–114 (GTSGTGNSGDGGGGGGADGPGS) are enriched in gly residues. A compositionally biased stretch (gly residues) spans 241–255 (GSSAGGNGSGTGNNN).

Forms a heterodimer with timeless (TIM); the complex then translocates into the nucleus. Post-translationally, phosphorylated with a circadian rhythmicity, probably by the double-time protein (dbt). Phosphorylation could be implicated in the stability of per monomer and in the formation of heterodimer per-tim.

The protein resides in the nucleus. The protein localises to the cytoplasm. It localises to the perinuclear region. Essential for biological clock functions. Determines the period length of circadian and ultradian rhythms; an increase in PER dosage leads to shortened circadian rhythms and a decrease leads to lengthened circadian rhythms. Essential for the circadian rhythmicity of locomotor activity, eclosion behavior, and for the rhythmic component of the male courtship song that originates in the thoracic nervous system. The biological cycle depends on the rhythmic formation and nuclear localization of the TIM-PER complex. Light induces the degradation of TIM, which promotes elimination of PER. Nuclear activity of the heterodimer coordinatively regulates PER and TIM transcription through a negative feedback loop. Behaves as a negative element in circadian transcriptional loop. Does not appear to bind DNA, suggesting indirect transcriptional inhibition. The chain is Period circadian protein (per) from Drosophila insularis (Fruit fly).